Here is a 255-residue protein sequence, read N- to C-terminus: 3-dehydroquinate dehydratase (255 aa).

3-dehydroquinate contacts are provided by residues 46–48 and R82; that span reads EWR. Catalysis depends on H143, which acts as the Proton donor/acceptor. Catalysis depends on K170, which acts as the Schiff-base intermediate with substrate. 3 residues coordinate 3-dehydroquinate: R213, S232, and Q236.

It belongs to the type-I 3-dehydroquinase family. Homodimer.

It carries out the reaction 3-dehydroquinate = 3-dehydroshikimate + H2O. It participates in metabolic intermediate biosynthesis; chorismate biosynthesis; chorismate from D-erythrose 4-phosphate and phosphoenolpyruvate: step 3/7. Involved in the third step of the chorismate pathway, which leads to the biosynthesis of aromatic amino acids. Catalyzes the cis-dehydration of 3-dehydroquinate (DHQ) and introduces the first double bond of the aromatic ring to yield 3-dehydroshikimate. The polypeptide is 3-dehydroquinate dehydratase (Bacillus subtilis (strain 168)).